Reading from the N-terminus, the 187-residue chain is Protein TIFY 11b (187 aa).

The 36-residue stretch at 68–103 folds into the Tify domain; the sequence is ATAPAAPLTIFYGGRMVVFEDFPADKAAEVMRMASS. A Jas motif is present at residues 121-145; the sequence is PIMRKASLQRFFAKRKDRLAATTPY. The Nuclear localization signal motif lies at 123–130; that stretch reads MRKASLQR. The disordered stretch occupies residues 139-168; that stretch reads LAATTPYARPSPAETKASEPEEKKTPTSWL. Positions 154-163 are enriched in basic and acidic residues; it reads KASEPEEKKT.

The protein belongs to the TIFY/JAZ family. As to quaternary structure, interacts with COI1B in a coronatine-dependent manner. Coronatine is an analog of jasmonoyl isoleucine (JA-Ile). Post-translationally, ubiquitinated. Targeted for degradation by the SCF(COI1) E3 ubiquitin ligase-proteasome pathway during jasmonate signaling.

The protein resides in the nucleus. In terms of biological role, repressor of jasmonate responses. The polypeptide is Protein TIFY 11b (Oryza sativa subsp. japonica (Rice)).